Reading from the N-terminus, the 82-residue chain is Protein transport protein Sec61 subunit beta (82 aa).

N-acetylmethionine is present on Met-1. Residues 1-34 are disordered; the sequence is MVGSGAPQRGSAAATASMRRRKPTSGAGGGGASG. The Cytoplasmic segment spans residues 1-55; the sequence is MVGSGAPQRGSAAATASMRRRKPTSGAGGGGASGGAAGSMLQFYTDDAPGLKISP. The helical transmembrane segment at 56–76 threads the bilayer; the sequence is NVVLIMSIGFIAFVAVLHVMG.

The protein belongs to the SEC61-beta family. In terms of assembly, heterotrimeric complex composed of SEC61-alpha, SEC61-beta and SEC61-gamma.

It localises to the endoplasmic reticulum membrane. Its function is as follows. Necessary for protein translocation in the endoplasmic reticulum. The sequence is that of Protein transport protein Sec61 subunit beta from Arabidopsis thaliana (Mouse-ear cress).